Consider the following 301-residue polypeptide: MKLKVTGAGINQVVTLKQDATLNDLIEHINVDVKTMRFGYPPQRINLQGEDASLGQTQLDELGINSGEKITIESSDSNESFSLPPPQPKPKRVLKSTEMSIGGSGENVLSVHPVLDDNSCLFHAIAYGIFKQDSVRDLREMVSKEVLNNPVKFNDAILDKPNKDYAQWILKMESWGGAIEIGIISDALAVAIYVVDIDAVKIEKFNEDKFDNYILILFNGIHYDSLTMNEFKTVFNKNQPESDDVLTAALQLASNLKQTGYSFNTHKAQIKCNTCQMTFVGEREVARHAESTGHVDFGQNR.

The UBX-like stretch occupies residues 4–80; it reads KVTGAGINQV…TIESSDSNES (77 aa). Residues 109–229 form the OTU domain; sequence LSVHPVLDDN…GIHYDSLTMN (121 aa). Residues 114 to 120 form a cys-loop region; the sequence is VLDDNSC. Residue Asp117 is part of the active site. The active-site Nucleophile is Cys120. Residue Lys160 forms a Glycyl lysine isopeptide (Lys-Gly) (interchain with G-Cter in ubiquitin) linkage. A variable-loop region spans residues 169 to 179; sequence ILKMESWGGAI. Positions 218-222 are his-loop; that stretch reads FNGIH. Residue Ile221 participates in substrate binding. His222 is a catalytic residue. An S2 site region spans residues 243–248; the sequence is DDVLTA. The C2H2-type zinc-finger motif lies at 270–294; it reads IKCNTCQMTFVGEREVARHAESTGH. The active site involves His294.

In terms of assembly, forms a complex composed of CDC48, NPL4, UFD1, DOA1, SHP1 and deubiquitinase OTU1; within the complex interacts with CDC48 and DOA1/UFD3.

It is found in the cytoplasm. It localises to the nucleus. It carries out the reaction Thiol-dependent hydrolysis of ester, thioester, amide, peptide and isopeptide bonds formed by the C-terminal Gly of ubiquitin (a 76-residue protein attached to proteins as an intracellular targeting signal).. Functionally, hydrolase that can remove conjugated ubiquitin from proteins and may therefore play an important regulatory role at the level of protein turnover by preventing degradation. Participates in the regulation of the ubiquitin conjugation pathway involving CDC48 by hindering multiubiquitination of substrates at the CDC48 chaperone. May be indirectly involved in PIS1 gene expression. This Saccharomyces cerevisiae (strain ATCC 204508 / S288c) (Baker's yeast) protein is Ubiquitin thioesterase OTU1 (OTU1).